The sequence spans 694 residues: Elongation factor G (694 aa).

The region spanning 10 to 285 is the tr-type G domain; it reads EKTRNIGIMA…AVLDYLPSPV (276 aa). GTP contacts are provided by residues 19–26, 83–87, and 137–140; these read AHIDAGKT, DTPGH, and NKMD.

Belongs to the TRAFAC class translation factor GTPase superfamily. Classic translation factor GTPase family. EF-G/EF-2 subfamily.

The protein localises to the cytoplasm. Its function is as follows. Catalyzes the GTP-dependent ribosomal translocation step during translation elongation. During this step, the ribosome changes from the pre-translocational (PRE) to the post-translocational (POST) state as the newly formed A-site-bound peptidyl-tRNA and P-site-bound deacylated tRNA move to the P and E sites, respectively. Catalyzes the coordinated movement of the two tRNA molecules, the mRNA and conformational changes in the ribosome. The sequence is that of Elongation factor G from Limosilactobacillus fermentum (strain NBRC 3956 / LMG 18251) (Lactobacillus fermentum).